The following is a 520-amino-acid chain: Type I restriction enzyme EcoprrI methylase subunit (520 aa).

Residues 198 to 203 (EFFTPQ), 230 to 232 (SGS), and Glu-254 each bind S-adenosyl-L-methionine.

It belongs to the N(4)/N(6)-methyltransferase family. In terms of assembly, the type I restriction/modification system is composed of three polypeptides R, M and S; the restriction enzyme has stoichiometry R(2)M(2)S(1) while the methyltransferase is M(2)S(1).

It catalyses the reaction a 2'-deoxyadenosine in DNA + S-adenosyl-L-methionine = an N(6)-methyl-2'-deoxyadenosine in DNA + S-adenosyl-L-homocysteine + H(+). Functionally, the subtype gamma methyltransferase (M) subunit of a type I restriction enzyme. The M and S subunits together form a methyltransferase (MTase) that methylates two adenine residues of the sequence 5'-CCAN(7)ATGC-3'. In the presence of the R subunit the complex can also act as an endonuclease, binding to the same target sequence but cutting the DNA some distance from this site. Whether the DNA is cut or modified depends on the methylation state of the target sequence. When the target site is unmodified, the DNA is cut. When the target site is hemimethylated, the complex acts as a maintenance MTase modifying the DNA so that both strands become methylated. After locating a non-methylated recognition site, the enzyme complex serves as a molecular motor that translocates DNA in an ATP-dependent manner until a collision occurs that triggers cleavage. This Escherichia coli protein is Type I restriction enzyme EcoprrI methylase subunit.